Reading from the N-terminus, the 286-residue chain is ATP synthase gamma chain (286 aa).

The protein belongs to the ATPase gamma chain family. In terms of assembly, F-type ATPases have 2 components, CF(1) - the catalytic core - and CF(0) - the membrane proton channel. CF(1) has five subunits: alpha(3), beta(3), gamma(1), delta(1), epsilon(1). CF(0) has three main subunits: a, b and c.

It is found in the cell inner membrane. In terms of biological role, produces ATP from ADP in the presence of a proton gradient across the membrane. The gamma chain is believed to be important in regulating ATPase activity and the flow of protons through the CF(0) complex. This Pseudomonas fluorescens (strain SBW25) protein is ATP synthase gamma chain.